The sequence spans 215 residues: AN1-type zinc finger protein C1271.05c (215 aa).

The span at 116–128 shows a compositional bias: polar residues; the sequence is IPSISKSNLTNPP. A disordered region spans residues 116-138; sequence IPSISKSNLTNPPLESEKSSDKA. An AN1-type zinc finger spans residues 144–193; that stretch reads ATSRRRCCHPTCTRITLRLAGNCLHCNGRFCAAHRLMEDHDCVALFSLRK. Zn(2+)-binding residues include C150, C155, C166, C169, C174, H177, H183, and C185.

Its subcellular location is the cytoplasm. It localises to the nucleus. This chain is AN1-type zinc finger protein C1271.05c, found in Schizosaccharomyces pombe (strain 972 / ATCC 24843) (Fission yeast).